A 693-amino-acid chain; its full sequence is MADTLEFNDIYQEVKGSMNDGRLRLSRAGLMYKNNKTGKVENISAADIAEVVWRRVALGHGIKLLTNGGHVYKYDGFRETEYDKLFDYFKSHFSVELVEKDLCVKGWNWGSVRFGGQLLSFDIGDQPAFELPLSNVSQCTTGKNEVTLEFHQNDDSEVSLMEIRFYVPPTQDDGGDSVEAFAQNVLSKADVIQATGDAVCIFRELQCLTPRGRYDIRIYPTFLHLHGKTFDYKIPYTTVLRLFLLPHKDQRQMFFVISLDPPIKQGQTRYHFLILLFSKDEDMTLTLNMSEEEVERRFEGKLKKSMSGCLYEMVSRVMKALVNRKITVPGNFLGHSGSQCITCSYKASSGLLYPLERGFIYVHKPPVHIRFDEITCVNFARGTTTTRSFDFEIETKQGSQYTFSSIEREEYGKLFDFVNAKKLSIKNRGLKEGMKPAYDDYADSDEDQHDAYLERMKEEGKIRENADSDESGDETDESFNPGEEEEEVAEEFDSNPSASSSSADSDDDTDKKKDAKRAKIVKQKKPRKKPEAKKTKDPGAPKRPMSAYMLWLNASREKIKSENPGISITDLSKKAGEIWKNMSRDKKEEWDRRAEEAKRDYEKAMKEYNTSAPTEASKKEKKTKGEKKKAETSEKKKQKPSSPARAAPKLNSESFKSKEFVSSDDSSSDDSAQKKDSEEIASTPASSAESGSD.

Residues 460-693 (GKIRENADSD…PASSAESGSD (234 aa)) are disordered. The segment covering 467–493 (DSDESGDETDESFNPGEEEEEVAEEFD) has biased composition (acidic residues). A compositionally biased stretch (low complexity) spans 494 to 503 (SNPSASSSSA). Residues 514 to 531 (DAKRAKIVKQKKPRKKPE) are compositionally biased toward basic residues. The HMG box DNA-binding region spans 541–609 (PKRPMSAYML…DYEKAMKEYN (69 aa)). The segment covering 571 to 606 (LSKKAGEIWKNMSRDKKEEWDRRAEEAKRDYEKAMK) has biased composition (basic and acidic residues). Residues 683–693 (TPASSAESGSD) show a composition bias toward polar residues.

It belongs to the SSRP1 family. As to quaternary structure, component of the FACT complex (also known as the DUF complex), a stable heterodimer of ssrp1 and supt16h. May also be a component of a ck2-spt16-ssrp1 complex which forms following UV irradiation, composed of ssrp1, supt16h, csnk2a1, csnk2a2 and csnk2b. The FACT complex may also interact with vcp.

Its subcellular location is the nucleus. It is found in the chromosome. It localises to the nucleolus. Functionally, component of the FACT complex, a general chromatin factor that acts to reorganize nucleosomes. The FACT complex is involved in multiple processes that require DNA as a template such as mRNA elongation, DNA replication and DNA repair. During transcription elongation the FACT complex acts as a histone chaperone that both destabilizes and restores nucleosomal structure. It facilitates the passage of RNA polymerase II and transcription by promoting the dissociation of one histone H2A-H2B dimer from the nucleosome, then subsequently promotes the reestablishment of the nucleosome following the passage of RNA polymerase II. Binds specifically to double-stranded DNA. In Xenopus laevis (African clawed frog), this protein is FACT complex subunit SSRP1 (ssrp1).